The following is a 207-amino-acid chain: Guanylate kinase (207 aa).

In terms of domain architecture, Guanylate kinase-like spans 10-187; sequence GFFIVLSAAS…AVERLQVIYQ (178 aa). 17–24 serves as a coordination point for ATP; sequence AASGTGKT.

This sequence belongs to the guanylate kinase family.

It localises to the cytoplasm. The catalysed reaction is GMP + ATP = GDP + ADP. Its function is as follows. Essential for recycling GMP and indirectly, cGMP. The chain is Guanylate kinase from Syntrophus aciditrophicus (strain SB).